Here is a 170-residue protein sequence, read N- to C-terminus: MDLEAMLASYPDFPKKGVLFKDIGPILRDPAALAWAADELLRRYPPADFDVIAGIESRGFILATIMSARSGKGMVMIRKPGKLPGKTVKLAYKTEYGEDILEAQHGSVKSGERVIICDDLLATGGTAAAAASLVEQVGGKVAGLAFIVELAKLCGADKIAGYNRKSLVVY.

The protein belongs to the purine/pyrimidine phosphoribosyltransferase family. As to quaternary structure, homodimer.

It localises to the cytoplasm. It carries out the reaction AMP + diphosphate = 5-phospho-alpha-D-ribose 1-diphosphate + adenine. It functions in the pathway purine metabolism; AMP biosynthesis via salvage pathway; AMP from adenine: step 1/1. Functionally, catalyzes a salvage reaction resulting in the formation of AMP, that is energically less costly than de novo synthesis. The polypeptide is Adenine phosphoribosyltransferase (Cenarchaeum symbiosum (strain A)).